The following is a 378-amino-acid chain: Ribosomal RNA large subunit methyltransferase G (378 aa).

The protein belongs to the methyltransferase superfamily. RlmG family.

It localises to the cytoplasm. The enzyme catalyses guanosine(1835) in 23S rRNA + S-adenosyl-L-methionine = N(2)-methylguanosine(1835) in 23S rRNA + S-adenosyl-L-homocysteine + H(+). Functionally, specifically methylates the guanine in position 1835 (m2G1835) of 23S rRNA. The protein is Ribosomal RNA large subunit methyltransferase G of Shigella dysenteriae serotype 1 (strain Sd197).